Here is an 880-residue protein sequence, read N- to C-terminus: Interference hedgehog (880 aa).

The first 20 residues, Met1 to Ala20, serve as a signal peptide directing secretion. The Extracellular portion of the chain corresponds to Ile21–Thr703. Ig-like C2-type domains are found at residues Pro45–Leu142, Pro132–Gln232, Pro252–Val340, and Pro346–Asn432. 4 disulfides stabilise this stretch: Cys68–Cys126, Cys173–Cys220, Cys276–Cys324, and Cys367–Cys414. N-linked (GlcNAc...) asparagine glycans are attached at residues Asn102 and Asn209. The interval Gly426–Val467 is disordered. 2 consecutive Fibronectin type-III domains span residues Pro461–Gly567 and Val575–Pro670. An N-linked (GlcNAc...) asparagine glycan is attached at Asn466. 4 residues coordinate heparin: Arg497, Lys501, Lys503, and Arg541. Asn557 is a glycosylation site (N-linked (GlcNAc...) asparagine). The interval Leu662–Asn697 is disordered. Composition is skewed to polar residues over residues Gly665–Pro678 and Thr688–Asn697. Residue Asn693 is glycosylated (N-linked (GlcNAc...) asparagine). The helical transmembrane segment at Gly704–Cys724 threads the bilayer. The Cytoplasmic portion of the chain corresponds to Arg725–Val880. Disordered stretches follow at residues Thr728 to Arg762 and Gln775 to Val880. Low complexity-rich tracts occupy residues Arg823–Asn837 and Ser864–Val880.

It belongs to the immunoglobulin superfamily. IHOG family. In terms of assembly, homodimer. Heterotetramer; 2 iHog chains bind 2 hh chains when facilitated by heparin, heparin is required to promote high-affinity interactions between hh and iHog.

The protein localises to the membrane. Its function is as follows. Mediates response to the active Hedgehog (Hh) protein signal in embryos, functioning upstream or at the level of patched (ptc). The protein is Interference hedgehog of Drosophila sechellia (Fruit fly).